The sequence spans 103 residues: Ig kappa-b4 chain C region (103 aa).

Positions 5–95 (PTVLIFPPAA…KVTQGTTSVV (91 aa)) constitute an Ig-like domain. Cysteines 26 and 85 form a disulfide.

In Oryctolagus cuniculus (Rabbit), this protein is Ig kappa-b4 chain C region.